The sequence spans 199 residues: Fe/S biogenesis protein NfuA (199 aa).

[4Fe-4S] cluster is bound by residues cysteine 156 and cysteine 159.

The protein belongs to the NfuA family. As to quaternary structure, homodimer. [4Fe-4S] cluster is required as a cofactor.

In terms of biological role, involved in iron-sulfur cluster biogenesis. Binds a 4Fe-4S cluster, can transfer this cluster to apoproteins, and thereby intervenes in the maturation of Fe/S proteins. Could also act as a scaffold/chaperone for damaged Fe/S proteins. The sequence is that of Fe/S biogenesis protein NfuA from Haemophilus ducreyi (strain 35000HP / ATCC 700724).